The primary structure comprises 430 residues: Ribosomal protein uS12 methylthiotransferase RimO (430 aa).

The 118-residue stretch at 2–119 (ISVYSISLGC…WPAMLAHALK (118 aa)) folds into the MTTase N-terminal domain. [4Fe-4S] cluster is bound by residues cysteine 11, cysteine 46, cysteine 81, cysteine 145, cysteine 149, and cysteine 152. The Radical SAM core domain occupies 131–361 (STGPSYAWLK…MEVQAEISEE (231 aa)). The region spanning 364-430 (AVHEGTRQQV…TRTYDLVALV (67 aa)) is the TRAM domain.

It belongs to the methylthiotransferase family. RimO subfamily. The cofactor is [4Fe-4S] cluster.

It localises to the cytoplasm. It carries out the reaction L-aspartate(89)-[ribosomal protein uS12]-hydrogen + (sulfur carrier)-SH + AH2 + 2 S-adenosyl-L-methionine = 3-methylsulfanyl-L-aspartate(89)-[ribosomal protein uS12]-hydrogen + (sulfur carrier)-H + 5'-deoxyadenosine + L-methionine + A + S-adenosyl-L-homocysteine + 2 H(+). Catalyzes the methylthiolation of an aspartic acid residue of ribosomal protein uS12. This is Ribosomal protein uS12 methylthiotransferase RimO from Nitratidesulfovibrio vulgaris (strain DP4) (Desulfovibrio vulgaris).